Reading from the N-terminus, the 241-residue chain is Proteasome subunit alpha type-5 (241 aa).

The residue at position 1 (methionine 1) is an N-acetylmethionine. Serine 16 carries the post-translational modification Phosphoserine. Threonine 55 carries the post-translational modification Phosphothreonine. Serine 56 and serine 63 each carry phosphoserine. Serine 198 carries an O-linked (GlcNAc) serine glycan.

The protein belongs to the peptidase T1A family. In terms of assembly, the 26S proteasome consists of a 20S proteasome core and two 19S regulatory subunits. The 20S proteasome core is a barrel-shaped complex made of 28 subunits that are arranged in four stacked rings. The two outer rings are each formed by seven alpha subunits, and the two inner rings are formed by seven beta subunits. The proteolytic activity is exerted by three beta-subunits PSMB5, PSMB6 and PSMB7. PSMA5 interacts directly with the PSMG1-PSMG2 heterodimer which promotes 20S proteasome assembly.

The protein localises to the cytoplasm. Its subcellular location is the nucleus. In terms of biological role, component of the 20S core proteasome complex involved in the proteolytic degradation of most intracellular proteins. This complex plays numerous essential roles within the cell by associating with different regulatory particles. Associated with two 19S regulatory particles, forms the 26S proteasome and thus participates in the ATP-dependent degradation of ubiquitinated proteins. The 26S proteasome plays a key role in the maintenance of protein homeostasis by removing misfolded or damaged proteins that could impair cellular functions, and by removing proteins whose functions are no longer required. Associated with the PA200 or PA28, the 20S proteasome mediates ubiquitin-independent protein degradation. This type of proteolysis is required in several pathways including spermatogenesis (20S-PA200 complex) or generation of a subset of MHC class I-presented antigenic peptides (20S-PA28 complex). The chain is Proteasome subunit alpha type-5 (PSMA5) from Bos taurus (Bovine).